The primary structure comprises 513 residues: MTANSEFNKRRLENIKRNNELLKKLNLAGIPARIRSEAGIEDHRKASGGAVKKKQGKAPVKREAKPAPIPTRRSRRLRGEAADVEGEAGAGSDTAQNVKQEEEWKELKEARVVGDIKLSDLIKSEDDGELLEKFRRYADKSFSGGDFFEELQRHQKPNPEVQRLREEMRLQQYDVFDPKELAIVHERVTALCFHPSQEKKLIVGGDTAGTVGLWNVADENPDPEHPDSVPDITRFKLFSRNVSKIEVFPTDSSKILAASYDGALRSIDMQSLKSDELLHFQNEHGDTLGISDCQFSYDSPNVVMLTTLGGEFAQRDLRTKPDTMNIMRLSDKKIGCMAIDPSRPYSVATASLDRTLRIWDLRKTVAKPDWSQYEDYASHEVVSTYNSRLSVSAVSYAPIDHTLVCNGYDNTVRLFNARADLPSELQPDFTIQHNCKSGRWVSVLKARFKLNMDVFAIANMKRAIDIYTSRGEQLSHLETSTVPAVVSWHPMQNWIVGGNNSGKVFLFTDAPQE.

A compositionally biased stretch (basic and acidic residues) spans 35 to 45; sequence RSEAGIEDHRK. A disordered region spans residues 35–103; that stretch reads RSEAGIEDHR…TAQNVKQEEE (69 aa). WD repeat units lie at residues 183-224, 237-277, 329-369, 386-425, 438-477, and 478-513; these read IVHE…PDPE, LFSR…SDEL, LSDK…AKPD, NSRL…PSEL, GRWV…LSHL, and ETST…APQE.

The protein belongs to the WD repeat DDB2/WDR76 family.

In terms of biological role, DNA-binding protein that binds to both single- and double-stranded DNA. Binds preferentially to UV-damaged DNA. May be involved in DNA-metabolic processes. The chain is DNA damage-binding protein CMR1 from Eremothecium gossypii (strain ATCC 10895 / CBS 109.51 / FGSC 9923 / NRRL Y-1056) (Yeast).